A 312-amino-acid polypeptide reads, in one-letter code: Malate dehydrogenase (312 aa).

NAD(+) contacts are provided by residues 7–13 (GAAGGIG) and Asp-34. The substrate site is built by Arg-81 and Arg-87. NAD(+) contacts are provided by residues Asn-94 and 117 to 119 (ITN). Substrate is bound by residues Asn-119 and Arg-153. His-177 functions as the Proton acceptor in the catalytic mechanism. Met-227 is an NAD(+) binding site.

It belongs to the LDH/MDH superfamily. MDH type 1 family. In terms of assembly, homodimer.

The enzyme catalyses (S)-malate + NAD(+) = oxaloacetate + NADH + H(+). Catalyzes the reversible oxidation of malate to oxaloacetate. This is Malate dehydrogenase from Yersinia pseudotuberculosis serotype O:1b (strain IP 31758).